Here is a 152-residue protein sequence, read N- to C-terminus: Superoxide dismutase [Cu-Zn] (152 aa).

Cu cation contacts are provided by His-45, His-47, and His-62. Cys-56 and Cys-145 are joined by a disulfide. The Zn(2+) site is built by His-62, His-70, His-79, and Asp-82. His-119 is a binding site for Cu cation.

The protein belongs to the Cu-Zn superoxide dismutase family. Homodimer. Cu cation serves as cofactor. Zn(2+) is required as a cofactor.

It is found in the cytoplasm. It carries out the reaction 2 superoxide + 2 H(+) = H2O2 + O2. Functionally, destroys radicals which are normally produced within the cells and which are toxic to biological systems. This is Superoxide dismutase [Cu-Zn] (SODCC) from Capsicum annuum (Capsicum pepper).